The chain runs to 462 residues: Argininosuccinate lyase (462 aa).

This sequence belongs to the lyase 1 family. Argininosuccinate lyase subfamily.

It is found in the cytoplasm. It carries out the reaction 2-(N(omega)-L-arginino)succinate = fumarate + L-arginine. It functions in the pathway amino-acid biosynthesis; L-arginine biosynthesis; L-arginine from L-ornithine and carbamoyl phosphate: step 3/3. The chain is Argininosuccinate lyase from Gloeothece citriformis (strain PCC 7424) (Cyanothece sp. (strain PCC 7424)).